The following is a 174-amino-acid chain: 3-hydroxydecanoyl-[acyl-carrier-protein] dehydratase (174 aa).

H71 is an active-site residue.

Belongs to the thioester dehydratase family. FabA subfamily. Homodimer.

The protein resides in the cytoplasm. The enzyme catalyses a (3R)-hydroxyacyl-[ACP] = a (2E)-enoyl-[ACP] + H2O. It catalyses the reaction (3R)-hydroxydecanoyl-[ACP] = (2E)-decenoyl-[ACP] + H2O. It carries out the reaction (2E)-decenoyl-[ACP] = (3Z)-decenoyl-[ACP]. It participates in lipid metabolism; fatty acid biosynthesis. Necessary for the introduction of cis unsaturation into fatty acids. Catalyzes the dehydration of (3R)-3-hydroxydecanoyl-ACP to E-(2)-decenoyl-ACP and then its isomerization to Z-(3)-decenoyl-ACP. Can catalyze the dehydratase reaction for beta-hydroxyacyl-ACPs with saturated chain lengths up to 16:0, being most active on intermediate chain length. In Nitrobacter hamburgensis (strain DSM 10229 / NCIMB 13809 / X14), this protein is 3-hydroxydecanoyl-[acyl-carrier-protein] dehydratase.